The sequence spans 282 residues: Dof zinc finger protein 4 (282 aa).

A Dof-type zinc finger spans residues 45–99 (VKCPRCESTNTKFCYYNNYNLSQPRHFCKSCRRYWTKGGVLRNVPVGGGCRKTKR). Cys47, Cys50, Cys72, and Cys75 together coordinate Zn(2+). The tract at residues 89 to 161 (PVGGGCRKTK…TTPATPSSNT (73 aa)) is disordered. Low complexity-rich tracts occupy residues 102-117 (SSSA…TAAT) and 125-161 (RASA…SSNT).

Its subcellular location is the nucleus. In terms of biological role, transcription factor that may transactivate seed storage protein genes in developing seeds. This Oryza sativa subsp. japonica (Rice) protein is Dof zinc finger protein 4.